Consider the following 600-residue polypeptide: Elongation factor 4 (600 aa).

One can recognise a tr-type G domain in the interval 7–189 (SLIRNFSIIA…ALVQRLPAPT (183 aa)). Residues 19–24 (DHGKST) and 136–139 (NKID) each bind GTP.

It belongs to the TRAFAC class translation factor GTPase superfamily. Classic translation factor GTPase family. LepA subfamily.

The protein resides in the cell inner membrane. The catalysed reaction is GTP + H2O = GDP + phosphate + H(+). Functionally, required for accurate and efficient protein synthesis under certain stress conditions. May act as a fidelity factor of the translation reaction, by catalyzing a one-codon backward translocation of tRNAs on improperly translocated ribosomes. Back-translocation proceeds from a post-translocation (POST) complex to a pre-translocation (PRE) complex, thus giving elongation factor G a second chance to translocate the tRNAs correctly. Binds to ribosomes in a GTP-dependent manner. In Gluconobacter oxydans (strain 621H) (Gluconobacter suboxydans), this protein is Elongation factor 4.